The chain runs to 938 residues: Isoleucine--tRNA ligase (938 aa).

The 'HIGH' region motif lies at 65–75; it reads PYANGSIHIGH. An L-isoleucyl-5'-AMP-binding site is contributed by glutamate 568. The short motif at 609–613 is the 'KMSKS' region element; it reads KMSKS. Lysine 612 is a binding site for ATP. Zn(2+) is bound by residues cysteine 905, cysteine 908, cysteine 921, and cysteine 924.

It belongs to the class-I aminoacyl-tRNA synthetase family. IleS type 1 subfamily. In terms of assembly, monomer. Requires Zn(2+) as cofactor.

The protein resides in the cytoplasm. The enzyme catalyses tRNA(Ile) + L-isoleucine + ATP = L-isoleucyl-tRNA(Ile) + AMP + diphosphate. In terms of biological role, catalyzes the attachment of isoleucine to tRNA(Ile). As IleRS can inadvertently accommodate and process structurally similar amino acids such as valine, to avoid such errors it has two additional distinct tRNA(Ile)-dependent editing activities. One activity is designated as 'pretransfer' editing and involves the hydrolysis of activated Val-AMP. The other activity is designated 'posttransfer' editing and involves deacylation of mischarged Val-tRNA(Ile). In Mannheimia succiniciproducens (strain KCTC 0769BP / MBEL55E), this protein is Isoleucine--tRNA ligase.